We begin with the raw amino-acid sequence, 333 residues long: T-cell surface glycoprotein CD1b1 (333 aa).

A signal peptide spans Met1–Asp17. Over Thr18 to Gly302 the chain is Extracellular. 3 N-linked (GlcNAc...) asparagine glycosylation sites follow: Asn38, Asn75, and Asn146. Intrachain disulfides connect Cys120–Cys184, Cys149–Cys163, and Cys224–Cys279. Residues Pro197–Trp295 form the Ig-like domain. The chain crosses the membrane as a helical span at residues Trp303–Phe323. Residues Tyr324–Leu333 are Cytoplasmic-facing. The short motif at Tyr329 to Ile332 is the Internalization signal element.

As to quaternary structure, heterodimer with B2M (beta-2-microglobulin). Interacts with saposin C.

It is found in the cell membrane. The protein resides in the endosome membrane. The protein localises to the lysosome membrane. Antigen-presenting protein that binds self and non-self lipid and glycolipid antigens and presents them to T-cell receptors on natural killer T-cells. The polypeptide is T-cell surface glycoprotein CD1b1 (CD1B1) (Cavia porcellus (Guinea pig)).